A 602-amino-acid polypeptide reads, in one-letter code: Trichothecene efflux pump TRI12 (602 aa).

Transmembrane regions (helical) follow at residues 49–69, 77–97, 107–127, and 134–154; these read LTLLSTYFAFEASAAAISFII, NVSLFSTVWTVSQSISILLMG, GFILGTNCVGIIGGIGCLYSF, and IGAQVLLGLAAGQPGACILFI. The N-linked (GlcNAc...) asparagine glycan is linked to Asn160. 11 consecutive transmembrane segments (helical) span residues 164 to 184, 196 to 216, 240 to 260, 271 to 291, 297 to 317, 355 to 375, 380 to 400, 408 to 428, 450 to 470, 484 to 504, and 532 to 552; these read FLGNVIVAFPNVIATGFGPYI, WIFYIYIIITAVSTVLAFIFY, WIGAFFLTAGMTLFLLGVSWG, ILGLLISGIVSCVIFVLYECY, PIIPMEFFPGTFAGFGCMLLI, STAGFGIWAGIVTLGSLFHIF, WQLIFGSAWVTAFLGAMASVN, IAFSICTGFVIGWAEDVTMLL, AICGSIFTAAFISLYTIKFPG, WGFPGVLLVAGFAYWRALTGQ, and AAAYSYVYYFAMALGVIAIIA. The N-linked (GlcNAc...) asparagine glycan is linked to Asn590.

Belongs to the major facilitator superfamily.

The protein localises to the cell membrane. Its function is as follows. Efflux pump that provides the dual role of trichothecene export and self-protection by allowing the fungus to evade the harmful effect of its own trichothecene production. This chain is Trichothecene efflux pump TRI12, found in Trichoderma arundinaceum.